Consider the following 145-residue polypeptide: Basic phospholipase A2 PC16 (145 aa).

Residues 1-21 (MYPAHLLLLLAVCVSLLGASA) form the signal peptide. Residues 22–27 (IPPLPL) constitute a propeptide that is removed on maturation. Cystine bridges form between Cys-38/Cys-98, Cys-54/Cys-144, Cys-56/Cys-72, Cys-71/Cys-125, Cys-78/Cys-118, Cys-87/Cys-111, and Cys-105/Cys-116. Tyr-55, Gly-57, and Gly-59 together coordinate Ca(2+). The active site involves His-75. Position 76 (Asp-76) interacts with Ca(2+). The active site involves Asp-119.

This sequence belongs to the phospholipase A2 family. Group I subfamily. D49 sub-subfamily. Ca(2+) is required as a cofactor.

The protein localises to the secreted. The catalysed reaction is a 1,2-diacyl-sn-glycero-3-phosphocholine + H2O = a 1-acyl-sn-glycero-3-phosphocholine + a fatty acid + H(+). Its function is as follows. PLA2 catalyzes the calcium-dependent hydrolysis of the 2-acyl groups in 3-sn-phosphoglycerides. This is Basic phospholipase A2 PC16 from Laticauda laticaudata (Blue-ringed sea krait).